The following is a 415-amino-acid chain: Protein-lysine N-trimethyltransferase SMYD5 (415 aa).

One can recognise an SET domain in the interval 20-351 (NCVDVRFINN…PGEEICISYL (332 aa)). The MYND-type zinc-finger motif lies at 95-135 (PHPELCKVRPDRHQACPQCQVMYCSSECRQAAMDQYHKILC). S-adenosyl-L-methionine is bound at residue Y350. The interval 388-415 (DMTSEDEEEVEGEGETEGEDMEDEMTDV) is disordered.

This sequence belongs to the class V-like SAM-binding methyltransferase superfamily. As to expression, expressed at high levels in the ovary and at lower levels in the fin, testis and brain.

The protein resides in the cytoplasm. It catalyses the reaction L-lysyl-[protein] + 3 S-adenosyl-L-methionine = N(6),N(6),N(6)-trimethyl-L-lysyl-[protein] + 3 S-adenosyl-L-homocysteine + 3 H(+). The enzyme catalyses L-lysyl(20)-[histone H4] + 3 S-adenosyl-L-methionine = N(6),N(6),N(6)-trimethyl-L-lysyl(20)-[histone H4] + 3 S-adenosyl-L-homocysteine + 3 H(+). The catalysed reaction is L-lysyl(36)-[histone H3] + 3 S-adenosyl-L-methionine = N(6),N(6),N(6)-trimethyl-L-lysyl(36)-[histone H3] + 3 S-adenosyl-L-homocysteine + 3 H(+). Its function is as follows. Protein-lysine N-trimethyltransferase that specifically catalyzes trimethylation of 'Lys-22' of the RPL40/eL40 subunit of the 60S ribosome, thereby promoting translation elongation and protein synthesis. May also act as a histone methyltransferase in the context of histone octamers, but not on nucleosome substrates: trimethylates 'Lys-36' of histone H3 and 'Lys-20' of histone H4 to form H3K36me3 and H4K20me3, respectively. The histone methyltransferase activity, which is independent of its SET domain, is however unsure in vivo. Plays a crucial role in hematopoiesis during embryogenesis by negatively regulating expression of genes related to both primitive and definitive hematopoiesis. The sequence is that of Protein-lysine N-trimethyltransferase SMYD5 from Danio rerio (Zebrafish).